The sequence spans 244 residues: Protein TIFY 10b (244 aa).

In terms of domain architecture, Tify spans 97-132 (QEPEKRQLTIFYGGKVLVFNDFPADKAKGLMQLASK). The Jas motif lies at 185–210 (PIARKASLHRFLEKRKDRLNAKTPYQ). The Nuclear localization signal motif lies at 187-194 (ARKASLHR). The disordered stretch occupies residues 193 to 244 (HRFLEKRKDRLNAKTPYQASPSDATPVKKEPESQPWLGLGPNAVVKPIERGQ). Residues 194–204 (RFLEKRKDRLN) show a composition bias toward basic and acidic residues.

Belongs to the TIFY/JAZ family. Ubiquitinated. Targeted for degradation by the SCF(COI1) E3 ubiquitin ligase-proteasome pathway during jasmonate signaling.

It is found in the nucleus. Its function is as follows. Repressor of jasmonate responses. In Oryza sativa subsp. indica (Rice), this protein is Protein TIFY 10b.